A 456-amino-acid polypeptide reads, in one-letter code: Bifunctional protein GlmU (456 aa).

Residues 1–229 (MLNNAMSVVI…LSEVEGVNNR (229 aa)) are pyrophosphorylase. UDP-N-acetyl-alpha-D-glucosamine contacts are provided by residues 11-14 (LAAG), Lys-25, Gln-76, 81-82 (GT), 103-105 (YGD), Gly-140, Glu-154, Asn-169, and Asn-227. Mg(2+) is bound at residue Asp-105. Asn-227 contacts Mg(2+). Positions 230 to 250 (LQLSRLERVYQSEQAEKLLLA) are linker. Positions 251-456 (GVMLRDPARF…EGWRRPVKKK (206 aa)) are N-acetyltransferase. 2 residues coordinate UDP-N-acetyl-alpha-D-glucosamine: Arg-333 and Lys-351. Catalysis depends on His-363, which acts as the Proton acceptor. UDP-N-acetyl-alpha-D-glucosamine-binding residues include Tyr-366 and Asn-377. Acetyl-CoA contacts are provided by residues Ala-380, 386 to 387 (NY), Ser-405, Ala-423, and Arg-440.

It in the N-terminal section; belongs to the N-acetylglucosamine-1-phosphate uridyltransferase family. The protein in the C-terminal section; belongs to the transferase hexapeptide repeat family. As to quaternary structure, homotrimer. Mg(2+) serves as cofactor.

The protein localises to the cytoplasm. It carries out the reaction alpha-D-glucosamine 1-phosphate + acetyl-CoA = N-acetyl-alpha-D-glucosamine 1-phosphate + CoA + H(+). The enzyme catalyses N-acetyl-alpha-D-glucosamine 1-phosphate + UTP + H(+) = UDP-N-acetyl-alpha-D-glucosamine + diphosphate. The protein operates within nucleotide-sugar biosynthesis; UDP-N-acetyl-alpha-D-glucosamine biosynthesis; N-acetyl-alpha-D-glucosamine 1-phosphate from alpha-D-glucosamine 6-phosphate (route II): step 2/2. It functions in the pathway nucleotide-sugar biosynthesis; UDP-N-acetyl-alpha-D-glucosamine biosynthesis; UDP-N-acetyl-alpha-D-glucosamine from N-acetyl-alpha-D-glucosamine 1-phosphate: step 1/1. Its pathway is bacterial outer membrane biogenesis; LPS lipid A biosynthesis. Catalyzes the last two sequential reactions in the de novo biosynthetic pathway for UDP-N-acetylglucosamine (UDP-GlcNAc). The C-terminal domain catalyzes the transfer of acetyl group from acetyl coenzyme A to glucosamine-1-phosphate (GlcN-1-P) to produce N-acetylglucosamine-1-phosphate (GlcNAc-1-P), which is converted into UDP-GlcNAc by the transfer of uridine 5-monophosphate (from uridine 5-triphosphate), a reaction catalyzed by the N-terminal domain. The sequence is that of Bifunctional protein GlmU from Shigella flexneri serotype 5b (strain 8401).